We begin with the raw amino-acid sequence, 320 residues long: Glucosaminate ammonia-lyase (320 aa).

Threonine 36–glutamine 43 contributes to the FAD binding site. Cysteines 136 and 139 form a disulfide. Aspartate 285–alanine 294 contacts FAD.

Belongs to the class-II pyridine nucleotide-disulfide oxidoreductase family.

The catalysed reaction is 2-amino-2-deoxy-D-gluconate = 2-dehydro-3-deoxy-D-gluconate + NH4(+). Its function is as follows. Catalyzes the conversion of 2-amino-2-deoxy-D-gluconate (GlcNA) to 2-keto-3-deoxy-D-gluconic acid (KDGA) and ammonia. The sequence is that of Glucosaminate ammonia-lyase from Pseudomonas fluorescens.